Reading from the N-terminus, the 91-residue chain is Small ribosomal subunit protein uS19 (91 aa).

This sequence belongs to the universal ribosomal protein uS19 family.

Functionally, protein S19 forms a complex with S13 that binds strongly to the 16S ribosomal RNA. This Exiguobacterium sp. (strain ATCC BAA-1283 / AT1b) protein is Small ribosomal subunit protein uS19.